A 294-amino-acid polypeptide reads, in one-letter code: Formamidopyrimidine-DNA glycosylase (294 aa).

Catalysis depends on Pro2, which acts as the Schiff-base intermediate with DNA. Glu3 (proton donor) is an active-site residue. Lys58 (proton donor; for beta-elimination activity) is an active-site residue. Residues His105, Arg124, and Lys167 each coordinate DNA. An FPG-type zinc finger spans residues 258–294; that stretch reads QVYDREGEPCRTRGCKGTVKRFTQNGRSTFWCPSCQK. Arg284 functions as the Proton donor; for delta-elimination activity in the catalytic mechanism.

Belongs to the FPG family. Monomer. The cofactor is Zn(2+).

It catalyses the reaction Hydrolysis of DNA containing ring-opened 7-methylguanine residues, releasing 2,6-diamino-4-hydroxy-5-(N-methyl)formamidopyrimidine.. It carries out the reaction 2'-deoxyribonucleotide-(2'-deoxyribose 5'-phosphate)-2'-deoxyribonucleotide-DNA = a 3'-end 2'-deoxyribonucleotide-(2,3-dehydro-2,3-deoxyribose 5'-phosphate)-DNA + a 5'-end 5'-phospho-2'-deoxyribonucleoside-DNA + H(+). Involved in base excision repair of DNA damaged by oxidation or by mutagenic agents. Acts as a DNA glycosylase that recognizes and removes damaged bases. Has a preference for oxidized purines, such as 7,8-dihydro-8-oxoguanine (8-oxoG). Has AP (apurinic/apyrimidinic) lyase activity and introduces nicks in the DNA strand. Cleaves the DNA backbone by beta-delta elimination to generate a single-strand break at the site of the removed base with both 3'- and 5'-phosphates. The polypeptide is Formamidopyrimidine-DNA glycosylase (Afipia carboxidovorans (strain ATCC 49405 / DSM 1227 / KCTC 32145 / OM5) (Oligotropha carboxidovorans)).